Consider the following 535-residue polypeptide: Phosphoenolpyruvate carboxykinase (ATP) (535 aa).

The substrate site is built by Arg59, Tyr201, and Lys207. Residues Lys207, His226, and 243-251 (GLSGTGKTT) each bind ATP. Lys207 and His226 together coordinate Mn(2+). Asp264 is a binding site for Mn(2+). ATP is bound by residues Glu292, Arg328, 444-445 (RI), and Thr450. Arg328 is a binding site for substrate.

Belongs to the phosphoenolpyruvate carboxykinase (ATP) family. Mn(2+) is required as a cofactor.

The protein localises to the cytoplasm. It catalyses the reaction oxaloacetate + ATP = phosphoenolpyruvate + ADP + CO2. It functions in the pathway carbohydrate biosynthesis; gluconeogenesis. Its function is as follows. Involved in the gluconeogenesis. Catalyzes the conversion of oxaloacetate (OAA) to phosphoenolpyruvate (PEP) through direct phosphoryl transfer between the nucleoside triphosphate and OAA. This Bacteroides fragilis (strain ATCC 25285 / DSM 2151 / CCUG 4856 / JCM 11019 / LMG 10263 / NCTC 9343 / Onslow / VPI 2553 / EN-2) protein is Phosphoenolpyruvate carboxykinase (ATP).